The chain runs to 702 residues: Archaeal Lon protease (702 aa).

Residues 1–63 (MSNESTNDAP…VGVEGDVSID (63 aa)) are disordered. Topologically, residues 1–183 (MSNESTNDAP…EARKRNQMRS (183 aa)) are cytoplasmic. The span at 10-48 (PPDDDPDDPEPSVDHDDTDGLQDDPADSVDDAGEVDDLE) shows a compositional bias: acidic residues. 117 to 124 (GSPGTGKS) provides a ligand contact to ATP. The helical transmembrane segment at 184–201 (FLMWIMILLAVGYALLIA) threads the bilayer. At 202–206 (TPARP) the chain is on the extracellular side. The helical transmembrane segment at 207 to 223 (LLALLSAAGIYLLFRYT) threads the bilayer. The Cytoplasmic segment spans residues 224–702 (NRGSDAMVPK…GTTGGNPSPQ (479 aa)). The 181-residue stretch at 487 to 667 (EEAVGRVNGL…SEVLDVALVG (181 aa)) folds into the Lon proteolytic domain. Catalysis depends on residues Ser574 and Lys617.

It belongs to the peptidase S16 family. Archaeal LonB subfamily. As to quaternary structure, homohexamer. Organized in a ring with a central cavity.

It is found in the cell membrane. In terms of biological role, ATP-dependent serine protease that mediates the selective degradation of mutant and abnormal proteins as well as certain short-lived regulatory proteins. Degrades polypeptides processively. The protein is Archaeal Lon protease of Halobacterium salinarum (strain ATCC 700922 / JCM 11081 / NRC-1) (Halobacterium halobium).